A 580-amino-acid chain; its full sequence is Mucin-1 (580 aa).

A signal peptide spans 1–22 (MTPDIQAPFLSLLLLFPVLTVA). At 23 to 489 (NVPTLTTSDS…GSGVPGWGIA (467 aa)) the chain is on the extracellular side. Residues 28–37 (TTSDSINPRR) are compositionally biased toward polar residues. The segment at 28-359 (TTSDSINPRR…SIALSTSSNP (332 aa)) is disordered. The span at 38–88 (TTPVSTTQSSPTSSPTKETSWSTTTTLLTASSPAPSPAASPGHDGASTPTS) shows a compositional bias: low complexity. 11 consecutive repeat copies span residues 70–89 (PAPS…PTSS), 90–109 (PAPS…PTSS), 110–129 (PAPS…PTSS), 130–149 (PAPS…PTSS), 150–169 (PAPS…PTGS), 170–189 (PAPS…PTSS), 190–209 (PAPS…PTGS), 210–229 (PAPS…PTSS), 230–249 (PAPS…PTGS), 250–269 (PAPS…LTSS), and 270–289 (PAPS…PTSS). Residues 70-289 (PAPSPAASPG…QHGASSPTSS (220 aa)) form an 11 X 20 AA approximate tandem repeats of P-A-P-S-P-A-A-S-P-G-H-D-G-A-S-T-P-T-S-S region. O-linked (GalNAc...) serine glycosylation is found at Ser73, Ser77, and Ser84. O-linked (GalNAc...) threonine glycosylation is found at Thr85 and Thr87. Ser88 and Ser89 each carry an O-linked (GalNAc...) serine glycan. 9 stretches are compositionally biased toward low complexity: residues 96 to 108 (ASPG…TPTS), 116 to 128 (ASPG…TPTS), 136 to 148 (ASPG…TPTS), 156 to 168 (ASPG…SPTG), 176 to 188 (ASPG…TPTS), 196 to 208 (ASPG…SPTG), 216 to 228 (ASPG…TPTS), 236 to 248 (ASPG…SPTG), and 256 to 306 (ASPG…MVTS). Asn161 is a glycosylation site (N-linked (GlcNAc...) asparagine). Asn201 is a glycosylation site (N-linked (GlcNAc...) asparagine). Residue Asn241 is glycosylated (N-linked (GlcNAc...) asparagine). The segment covering 308-344 (HKGTSSRATMTPVSKGTPSSVPSSETAPTAASHITRT) has biased composition (polar residues). Positions 345–357 (AASSPSIALSTSS) are enriched in low complexity. Positions 368 to 475 (RVSLYFLSFR…VSVYSAPFPS (108 aa)) constitute an SEA domain. N-linked (GlcNAc...) asparagine glycosylation is found at Asn384 and Asn460. The chain crosses the membrane as a helical span at residues 490–510 (LLVLVCVLVALAIIYLIALVV). S-palmitoyl cysteine attachment occurs at residues Cys511 and Cys513. Residues 511 to 580 (CQCGRKKCEQ…TNLAATSANL (70 aa)) lie on the Cytoplasmic side of the membrane. The interaction with P53 stretch occupies residues 519-555 (EQLDVFPTLDAYHPMSEYSTYHTHGRYVPPGSTKRSP). Tyr530 bears the Phosphotyrosine; by PDGFR mark. The short motif at 530-533 (YHPM) is the Interaction with GRB2 element. Residue Tyr539 is modified to Phosphotyrosine. A disordered region spans residues 544 to 563 (RYVPPGSTKRSPYEEVSAGN). Phosphotyrosine; by PDGFR is present on Tyr545. Residues 550 to 557 (STKRSPYE) are required for interaction with GSK3B. Thr551 bears the Phosphothreonine; by PKC/PRKCD mark. The residue at position 554 (Ser554) is a Phosphoserine; by GSK3-beta. Tyr556 carries the post-translational modification Phosphotyrosine; by CSK, EGFR and SRC. The Interaction with SRC and ESR1 motif lies at 556 to 559 (YEEV). The interval 560–568 (SAGNGGSNL) is required for interaction with beta- and gamma-catenins. Phosphotyrosine is present on Tyr570. A Required for interaction with AP1S2 motif is present at residues 570-572 (YTN).

The alpha subunit forms a tight, non-covalent heterodimeric complex with the proteolytically-released beta subunit. Binds directly the SH2 domain of GRB2, and forms a MUC1/GRB2/SOS1 complex involved in RAS signaling. The cytoplasmic tail (MUC1CT) interacts with several proteins such as, SRC, CTNNB1 and ERBs. Interaction with the SH2 domain of CSK decreases interaction with GSK3B. Interacts with CTNNB1/beta-catenin and JUP/gamma-catenin and promotes cell adhesion. Interaction with JUP/gamma-catenin is induced by heregulin. Binds PRKCD, ERBB2, ERBB3 and ERBB4. Heregulin (HRG) stimulates the interaction with ERBB2 and, to a much lesser extent, the interaction with ERBB3 and ERBB4. Interacts with P53 in response to DNA damage. Interacts with KLF4. Interacts with estrogen receptor alpha/ESR1, through its DNA-binding domain, and stimulates its transcription activity. Binds ADAM17. In terms of processing, highly glycosylated (N- and O-linked carbohydrates and sialic acid). O-linked glycosylation consists mainly of GalNAc, galactose, and sialic acid. The ratio from pools of milk from different dairy breeds is GalNAc: GlcNAc:galactose:mannose:sialic acid is 14:1:10:1:15. Proteolytic cleavage in the SEA domain occurs in the endoplasmic reticulum by an autoproteolytic mechanism and requires the full-length SEA domain as well as requiring a Ser, Thr or Cys residue at the P + 1 site. Ectodomain shedding is mediated by ADAM17 in uterine epithelial cells. Post-translationally, dual palmitoylation on cysteine residues in the CQC motif is required for recycling from endosomes back to the plasma membrane. In terms of processing, phosphorylated on tyrosines and serine residues in the C-terminal. Phosphorylation on tyrosines in the C-terminal increases the nuclear location of MUC1 and beta-catenin. Phosphorylation by PKC delta induces binding of MUC1 to beta-catenin/CTNNB1 and thus decreases the formation of the beta-catenin/E-cadherin complex. Src-mediated phosphorylation inhibits interaction with GSK3B. Csk- or Src- or EGFR-mediated phosphorylation on Tyr-556 increases binding to beta-catenin/CTNNB1. GSK3B-mediated phosphorylation on Ser-554 decreases this interaction but restores the formation of the beta-cadherin/E-cadherin complex. On T-cell receptor activation, phosphorylated by LCK. PDGFR-mediated phosphorylation increases nuclear colocalization of MUC1CT and CTNNB1. Expressed on the apical surface of epithelia cells, and on the milk fat globule membrane (MGGM).

It localises to the apical cell membrane. The protein resides in the cell membrane. It is found in the cytoplasm. The protein localises to the nucleus. Functionally, the alpha subunit has cell adhesive properties. May provide a protective layer on epithelial cells against bacterial and enzyme attack. In terms of biological role, the beta subunit contains a C-terminal domain which is involved in cell signaling, through phosphorylations and protein-protein interactions. Modulates signaling in ERK, Src and NF-kappa-B pathways. In activated T-cells, influences directly or indirectly the Ras/MAPK pathway. Promotes tumor progression. Regulates P53-mediated transcription and determines cell fate in the genotoxic stress response. Binds, together with KLF4, the PE21 promoter element of P53 and represses P53 activity. This Bos taurus (Bovine) protein is Mucin-1 (MUC1).